We begin with the raw amino-acid sequence, 94 residues long: Small ribosomal subunit protein bS6 (94 aa).

This sequence belongs to the bacterial ribosomal protein bS6 family.

Binds together with bS18 to 16S ribosomal RNA. The chain is Small ribosomal subunit protein bS6 from Akkermansia muciniphila (strain ATCC BAA-835 / DSM 22959 / JCM 33894 / BCRC 81048 / CCUG 64013 / CIP 107961 / Muc).